We begin with the raw amino-acid sequence, 473 residues long: Alliin lyase 2 (473 aa).

The N-terminal stretch at 1–15 is a signal peptide; that stretch reads MICLVILTCIIMSNS. A propeptide spanning residues 16–25 is cleaved from the precursor; it reads FVNNNNMVQA. Positions 38–84 constitute an EGF-like; atypical domain; that stretch reads EAVANINCSEHGRAFLDGIISEGSPKCECNTCYTGPDCSEKIQGCSA. Asn-44 is a glycosylation site (N-linked (GlcNAc...) asparagine). 3 cysteine pairs are disulfide-bonded: Cys-45/Cys-64, Cys-66/Cys-75, and Cys-69/Cys-82. 117 to 125 lines the chloride pocket; it reads YFFNPVSNF. Asn-171 and Asn-216 each carry an N-linked (GlcNAc...) asparagine glycan. Lys-276 bears the N6-(pyridoxal phosphate)lysine mark. A glycan (N-linked (GlcNAc...) asparagine) is linked at Asn-353. Cysteines 393 and 401 form a disulfide.

This sequence belongs to the alliinase family. In terms of assembly, homodimer. Requires pyridoxal 5'-phosphate as cofactor. Post-translationally, glycosylated. High expression in bulbs, lower expression in leaves, and no expression in roots.

Its subcellular location is the vacuole. It carries out the reaction an S-alkyl-L-cysteine S-oxide = an S-alkyl sulfenate + 2-aminoprop-2-enoate. The catalysed reaction is alliin = allylsulfenate + 2-aminoprop-2-enoate. Able to cleave the C-S bond of sulfoxide derivatives of Cys to produce allicin, thus giving rise to all sulfur compounds which are responsible for most of the properties of garlic, such as the specific smell and flavor as well as the health benefits like blood lipid or blood pressure lowering. This is Alliin lyase 2 from Allium sativum (Garlic).